The following is a 262-amino-acid chain: tRNA (guanine-N(1)-)-methyltransferase (262 aa).

S-adenosyl-L-methionine contacts are provided by residues Gly113 and 137–142 (IGDYVL).

This sequence belongs to the RNA methyltransferase TrmD family. As to quaternary structure, homodimer.

The protein localises to the cytoplasm. The catalysed reaction is guanosine(37) in tRNA + S-adenosyl-L-methionine = N(1)-methylguanosine(37) in tRNA + S-adenosyl-L-homocysteine + H(+). Specifically methylates guanosine-37 in various tRNAs. This Thermobifida fusca (strain YX) protein is tRNA (guanine-N(1)-)-methyltransferase.